A 96-amino-acid chain; its full sequence is MSELGNLETTVTGKIKRFNNGGGYYYTTVVSPAADAYSFPPVIRIKSKKSLGRVGDEIADIHCRITGYERSFPYTDKQTGEQSRGFNVDMLLELLE.

Belongs to the inovirus G5P protein family. As to quaternary structure, homodimer.

Functionally, binds to DNA in a highly cooperative manner without pronounced sequence specificity. During synthesis of the single-stranded (progeny) viral DNA, prevents the conversion into the double-stranded replicative form. G5P is displaced by the capsid protein G8P during phage assembly on the inner bacterial membrane. The chain is DNA-Binding protein G5P (V) from Escherichia coli (Bacteriophage If1).